The primary structure comprises 78 residues: cAMP-dependent protein kinase inhibitor beta (78 aa).

Residues 1–10 are compositionally biased toward basic and acidic residues; the sequence is MRTDSSKMTD. Positions 1 to 78 are disordered; sequence MRTDSSKMTD…QLEKPQNEEK (78 aa). A compositionally biased stretch (polar residues) spans 33 to 42; the sequence is IQSSAATDGT. Positions 53–78 are enriched in basic and acidic residues; that stretch reads SVKEDAKEKDEKTTQDQLEKPQNEEK.

Belongs to the PKI family.

In terms of biological role, extremely potent competitive inhibitor of cAMP-dependent protein kinase activity, this protein interacts with the catalytic subunit of the enzyme after the cAMP-induced dissociation of its regulatory chains. The polypeptide is cAMP-dependent protein kinase inhibitor beta (PKIB) (Homo sapiens (Human)).